The chain runs to 258 residues: uncharacterized protein (258 aa).

3 Solcar repeats span residues 9–78, 81–160, and 165–246; these read KPIL…AKAR, PGVR…FKKK, and DHVF…VKSH. A run of 6 helical transmembrane segments spans residues 11–31, 53–73, 87–107, 139–159, 171–191, and 218–239; these read ILVGGLSGLVAETLVFPLSTI, GLSSVLVSTLPSASSFFFVYE, LVSASVAEVVSCGILAPAEVV, MCGRNVPATAFQFVLYEQFKK, PKGAALSGAITAAVLTPLDVI, and FEKGLGLRVFASSLGLSIYLGT.

It belongs to the mitochondrial carrier (TC 2.A.29) family.

Its subcellular location is the mitochondrion inner membrane. This is an uncharacterized protein from Schizosaccharomyces pombe (strain 972 / ATCC 24843) (Fission yeast).